The chain runs to 414 residues: Alanine--glyoxylate aminotransferase (414 aa).

A mitochondrion-targeting transit peptide spans 1 to 23; the sequence is MFRALARASATLGPQVAGWARTM. The residue at position 231 (K231) is an N6-(pyridoxal phosphate)lysine. An N6-acetyllysine; alternate modification is found at K247. Residue K247 is modified to N6-succinyllysine; alternate. N6-acetyllysine is present on residues K256 and K334. Position 382 (R382) interacts with substrate. The Microbody targeting signal motif lies at 412 to 414; the sequence is NKL.

Belongs to the class-V pyridoxal-phosphate-dependent aminotransferase family. In terms of assembly, homodimer. Requires pyridoxal 5'-phosphate as cofactor.

It is found in the peroxisome. The protein localises to the mitochondrion matrix. The catalysed reaction is L-serine + pyruvate = 3-hydroxypyruvate + L-alanine. It catalyses the reaction glyoxylate + L-alanine = glycine + pyruvate. In terms of biological role, catalyzes the transamination of glyoxylate to glycine and contributes to the glyoxylate detoxification. Functionally, catalyzes the transamination between L-serine and pyruvate and contributes to gluconeogenesis from the L-serine metabolism. The sequence is that of Alanine--glyoxylate aminotransferase from Felis catus (Cat).